Reading from the N-terminus, the 576-residue chain is Arginine--tRNA ligase (576 aa).

The 'HIGH' region signature appears at 122–132 (PNVAKQMHVGH).

Belongs to the class-I aminoacyl-tRNA synthetase family. In terms of assembly, monomer.

The protein localises to the cytoplasm. The catalysed reaction is tRNA(Arg) + L-arginine + ATP = L-arginyl-tRNA(Arg) + AMP + diphosphate. The protein is Arginine--tRNA ligase of Yersinia pestis bv. Antiqua (strain Antiqua).